The chain runs to 278 residues: Elongation factor Ts (278 aa).

The segment at 79–82 (TDFV) is involved in Mg(2+) ion dislocation from EF-Tu.

This sequence belongs to the EF-Ts family.

It is found in the cytoplasm. Functionally, associates with the EF-Tu.GDP complex and induces the exchange of GDP to GTP. It remains bound to the aminoacyl-tRNA.EF-Tu.GTP complex up to the GTP hydrolysis stage on the ribosome. The chain is Elongation factor Ts from Borrelia recurrentis (strain A1).